The primary structure comprises 309 residues: NAD kinase (309 aa).

Catalysis depends on Asp-89, which acts as the Proton acceptor. NAD(+) contacts are provided by residues 89 to 90, 163 to 164, Arg-191, Asp-193, and 204 to 209; these read DG, NE, and TAYSLS.

This sequence belongs to the NAD kinase family. It depends on a divalent metal cation as a cofactor.

It localises to the cytoplasm. The catalysed reaction is NAD(+) + ATP = ADP + NADP(+) + H(+). In terms of biological role, involved in the regulation of the intracellular balance of NAD and NADP, and is a key enzyme in the biosynthesis of NADP. Catalyzes specifically the phosphorylation on 2'-hydroxyl of the adenosine moiety of NAD to yield NADP. This chain is NAD kinase, found in Shewanella halifaxensis (strain HAW-EB4).